Consider the following 503-residue polypeptide: UDP-N-acetylmuramoyl-L-alanyl-D-glutamate--2,6-diaminopimelate ligase (503 aa).

UDP-N-acetyl-alpha-D-muramoyl-L-alanyl-D-glutamate is bound at residue serine 32. 117 to 123 (GTNGKTT) contacts ATP. Residues 159-160 (TT), serine 186, glutamine 192, and arginine 194 contribute to the UDP-N-acetyl-alpha-D-muramoyl-L-alanyl-D-glutamate site. Lysine 226 is subject to N6-carboxylysine. Meso-2,6-diaminopimelate-binding positions include arginine 396, 420 to 423 (DNPR), glycine 471, and glutamate 475. The Meso-diaminopimelate recognition motif motif lies at 420–423 (DNPR).

This sequence belongs to the MurCDEF family. MurE subfamily. It depends on Mg(2+) as a cofactor. In terms of processing, carboxylation is probably crucial for Mg(2+) binding and, consequently, for the gamma-phosphate positioning of ATP.

Its subcellular location is the cytoplasm. The enzyme catalyses UDP-N-acetyl-alpha-D-muramoyl-L-alanyl-D-glutamate + meso-2,6-diaminopimelate + ATP = UDP-N-acetyl-alpha-D-muramoyl-L-alanyl-gamma-D-glutamyl-meso-2,6-diaminopimelate + ADP + phosphate + H(+). Its pathway is cell wall biogenesis; peptidoglycan biosynthesis. Functionally, catalyzes the addition of meso-diaminopimelic acid to the nucleotide precursor UDP-N-acetylmuramoyl-L-alanyl-D-glutamate (UMAG) in the biosynthesis of bacterial cell-wall peptidoglycan. In Prochlorococcus marinus (strain SARG / CCMP1375 / SS120), this protein is UDP-N-acetylmuramoyl-L-alanyl-D-glutamate--2,6-diaminopimelate ligase.